The chain runs to 206 residues: MRGKLITLEGIDGSGKSTVAKKLQENSELRVFEPVFTREPTRGTLTGNAVENAIQSDTDQLAELFLFTADHAEHLAKLVKPALEDGKTVISDRYSDSRYAYQGITLKNRLDNPLEWVRDLHRGWTVIPDLTFLFDIEPEIAVKRCGKRGEQTKFEKIEFLRGVRELFLGLAAEEPERFVIVDASGSPEDVEKAVVQKILDFVQRIE.

10 to 17 provides a ligand contact to ATP; it reads GIDGSGKS.

It belongs to the thymidylate kinase family.

It catalyses the reaction dTMP + ATP = dTDP + ADP. In Methanosarcina acetivorans (strain ATCC 35395 / DSM 2834 / JCM 12185 / C2A), this protein is Probable thymidylate kinase.